Reading from the N-terminus, the 147-residue chain is Hemoglobin subunit beta (147 aa).

In terms of domain architecture, Globin spans 2–147 (HWEDAEKQYI…ISHSLGREYH (146 aa)). H63 and H92 together coordinate heme b.

This sequence belongs to the globin family. As to quaternary structure, heterotetramer of two alpha chains and two beta chains. As to expression, red blood cells.

In terms of biological role, involved in oxygen transport from the lung to the various peripheral tissues. The polypeptide is Hemoglobin subunit beta (HBB) (Lepidosiren paradoxus (South American lungfish)).